The primary structure comprises 979 residues: Translation initiation factor IF-2 (979 aa).

A disordered region spans residues 33–391; it reads VKSHSSTITT…TPPAEITLTE (359 aa). Low complexity-rich tracts occupy residues 54-63 and 139-150; these read QKRPQAPKAQ and AKTTSPKAEPAA. Over residues 151–166 the composition is skewed to pro residues; it reads PAAPKPKLMGPPPRPT. Acidic residues predominate over residues 234–252; the sequence is PELDEEPDTNNVEGDDDAT. Composition is skewed to basic residues over residues 263 to 278 and 294 to 303; these read PAAKPKKAIGPKPSKR and TKTSKLKRRP. Positions 314–328 are enriched in polar residues; the sequence is GTTTNNNAEVPSVSL. A compositionally biased stretch (basic and acidic residues) spans 371–380; that stretch reads KEQRRDRPDV. In terms of domain architecture, tr-type G spans 468–641; sequence HRPPVVTIMG…LLVSEIEELS (174 aa). A G1 region spans residues 477–484; that stretch reads GHVDHGKT. Position 477-484 (477-484) interacts with GTP; sequence GHVDHGKT. Residues 502-506 are G2; sequence GITQH. A G3 region spans residues 527–530; it reads DTPG. GTP is bound by residues 527-531 and 581-584; these read DTPGH and NKMD. A G4 region spans residues 581 to 584; the sequence is NKMD. The segment at 617 to 619 is G5; that stretch reads SAL.

Belongs to the TRAFAC class translation factor GTPase superfamily. Classic translation factor GTPase family. IF-2 subfamily.

Its subcellular location is the cytoplasm. In terms of biological role, one of the essential components for the initiation of protein synthesis. Protects formylmethionyl-tRNA from spontaneous hydrolysis and promotes its binding to the 30S ribosomal subunits. Also involved in the hydrolysis of GTP during the formation of the 70S ribosomal complex. The chain is Translation initiation factor IF-2 from Picosynechococcus sp. (strain ATCC 27264 / PCC 7002 / PR-6) (Agmenellum quadruplicatum).